Consider the following 355-residue polypeptide: NADH-quinone oxidoreductase subunit H (355 aa).

The next 8 helical transmembrane spans lie at 25 to 45 (IVRI…LILW), 91 to 111 (WLYL…WAVI), 126 to 146 (LLYA…AGWA), 170 to 190 (MGFA…SEIV), 205 to 225 (FLSW…ISGI), 252 to 272 (GMAF…ISAL), 290 to 310 (FIPG…VFIW), and 330 to 350 (VFLP…MSPL).

This sequence belongs to the complex I subunit 1 family. NDH-1 is composed of 14 different subunits. Subunits NuoA, H, J, K, L, M, N constitute the membrane sector of the complex.

It localises to the cell inner membrane. It carries out the reaction a quinone + NADH + 5 H(+)(in) = a quinol + NAD(+) + 4 H(+)(out). Its function is as follows. NDH-1 shuttles electrons from NADH, via FMN and iron-sulfur (Fe-S) centers, to quinones in the respiratory chain. The immediate electron acceptor for the enzyme in this species is believed to be ubiquinone. Couples the redox reaction to proton translocation (for every two electrons transferred, four hydrogen ions are translocated across the cytoplasmic membrane), and thus conserves the redox energy in a proton gradient. This subunit may bind ubiquinone. The polypeptide is NADH-quinone oxidoreductase subunit H (Burkholderia lata (strain ATCC 17760 / DSM 23089 / LMG 22485 / NCIMB 9086 / R18194 / 383)).